A 163-amino-acid chain; its full sequence is MALRMWASSAANALGVSCAPKSHLLPALSLSRCFSTVLDGLKYASSHEWVKHGGSVATIGITDHAQGHLGDVVFAELPEGGAVSAGKPFASVESVKATSDVNSPISGEIVEVNTKLSDSPGLLNSSPYEEGWMVKVKPSNPAELESLMGSKEYTKFCEEEDAH.

The transit peptide at 1–34 directs the protein to the mitochondrion; sequence MALRMWASSAANALGVSCAPKSHLLPALSLSRCF. One can recognise a Lipoyl-binding domain in the interval 56 to 137; it reads VATIGITDHA…YEEGWMVKVK (82 aa). An N6-lipoyllysine modification is found at K96.

Belongs to the GcvH family. As to quaternary structure, the glycine cleavage system is composed of four proteins: P, T, L and H. (R)-lipoate serves as cofactor.

It is found in the mitochondrion. The glycine cleavage system catalyzes the degradation of glycine. The H protein shuttles the methylamine group of glycine from the P protein to the T protein. This Mesembryanthemum crystallinum (Common ice plant) protein is Glycine cleavage system H protein, mitochondrial (GDCSH).